We begin with the raw amino-acid sequence, 696 residues long: Protein OS-9 homolog (696 aa).

Positions 1-15 (MLVVAFASLLGAARA) are cleaved as a signal peptide. Residues N35, N46, and N68 are each glycosylated (N-linked (GlcNAc...) asparagine). Residues 106-224 (NQCLVSQNGF…QVIVPDLCQL (119 aa)) enclose the MRH domain. C108 and C121 are joined by a disulfide. Positions 116, 128, 178, 184, 206, and 212 each coordinate a mannooligosaccharide derivative. 2 disulfides stabilise this stretch: C177–C210 and C192–C222. N-linked (GlcNAc...) asparagine glycans are attached at residues N276, N290, and N372. Disordered stretches follow at residues 450–600 (IEAS…DNSD) and 667–696 (TLGNNDGVASDVKDEEVVESDRNGVIDDEL). The segment covering 458-467 (TKASESTPVS) has biased composition (polar residues). A compositionally biased stretch (basic and acidic residues) spans 482 to 498 (RSRDKEEYFKENEKQGE). 3 stretches are compositionally biased toward polar residues: residues 499-518 (ENNAQVPFSAHNNEQHGTIS), 528-553 (NQKQLANTQKGDTDTPPQSSQSSAND), and 585-597 (NIDNSSGRSTLND). An N-linked (GlcNAc...) asparagine glycan is attached at N588. Residues 685–696 (ESDRNGVIDDEL) show a composition bias toward basic and acidic residues.

Belongs to the OS-9 family. In terms of assembly, interacts with missfolded ER lumenal proteins.

The protein localises to the endoplasmic reticulum membrane. Its function is as follows. Lectin involved in the quality control of the secretory pathway. As a member of the endoplasmic reticulum-associated degradation lumenal (ERAD-L) surveillance system, targets misfolded endoplasmic reticulum lumenal glycoproteins for degradation. The chain is Protein OS-9 homolog (YOS9) from Candida glabrata (strain ATCC 2001 / BCRC 20586 / JCM 3761 / NBRC 0622 / NRRL Y-65 / CBS 138) (Yeast).